The primary structure comprises 510 residues: ATP synthase subunit alpha (510 aa).

170–177 (GDRQTGKT) serves as a coordination point for ATP.

This sequence belongs to the ATPase alpha/beta chains family. F-type ATPases have 2 components, CF(1) - the catalytic core - and CF(0) - the membrane proton channel. CF(1) has five subunits: alpha(3), beta(3), gamma(1), delta(1), epsilon(1). CF(0) has three main subunits: a(1), b(2) and c(9-12). The alpha and beta chains form an alternating ring which encloses part of the gamma chain. CF(1) is attached to CF(0) by a central stalk formed by the gamma and epsilon chains, while a peripheral stalk is formed by the delta and b chains.

It localises to the cell inner membrane. The catalysed reaction is ATP + H2O + 4 H(+)(in) = ADP + phosphate + 5 H(+)(out). Functionally, produces ATP from ADP in the presence of a proton gradient across the membrane. The alpha chain is a regulatory subunit. The sequence is that of ATP synthase subunit alpha from Maricaulis maris (strain MCS10) (Caulobacter maris).